The following is a 575-amino-acid chain: Guanine nucleotide-binding protein-like 3-like protein (575 aa).

Residues 1–30 are compositionally biased toward basic residues; it reads MMKLRHKNKKPGKGSKGCKKPAKQNGKKAA. The interval 1–75 is disordered; sequence MMKLRHKNKK…AAREQERHRR (75 aa). Residues 9–28 form a required for nucleolar localization region; the sequence is KKPGKGSKGCKKPAKQNGKK. The segment covering 42 to 72 has biased composition (basic and acidic residues); the sequence is SNDHASREAELKKKRVGEMREKQQAAREQER. A coiled-coil region spans residues 51–79; the sequence is ELKKKRVGEMREKQQAAREQERHRRRTIE. The CP-type G domain occupies 118-303; sequence YKEFHKVVEY…LLDAPGIVPG (186 aa). Residues 166–169, 252–259, and 296–299 each bind GTP; these read NKID, GLPNVGKS, and DAPG. A Glycyl lysine isopeptide (Lys-Gly) (interchain with G-Cter in SUMO1) cross-link involves residue Lys470.

Belongs to the TRAFAC class YlqF/YawG GTPase family. In terms of assembly, interacts with MDM2; this interaction, which occurs in the nucleoplasm, stabilizes MDM2. Indirectly interacts with TP53, via MDM2-binding. Interacts with TERF1; this interaction probably occurs in the nucleoplasm and is increased during mitosis, when the nucleolus is disassembled. This binding may promote TERF1 homodimerization. Interacts with TERT.

It localises to the nucleus. It is found in the nucleolus. Stabilizes TERF1 telomeric association by preventing TERF1 recruitment by PML. Stabilizes TERF1 protein by preventing its ubiquitination and hence proteasomal degradation. Does so by interfering with TERF1-binding to FBXO4 E3 ubiquitin-protein ligase. Required for cell proliferation. By stabilizing TRF1 protein during mitosis, promotes metaphase-to-anaphase transition. Stabilizes MDM2 protein by preventing its ubiquitination, and hence proteasomal degradation. By acting on MDM2, may affect TP53 activity. Required for normal processing of ribosomal pre-rRNA. Binds GTP. The protein is Guanine nucleotide-binding protein-like 3-like protein (GNL3L) of Bos taurus (Bovine).